The chain runs to 427 residues: Serine/arginine (SR)-type shuttling mRNA binding protein GBP2 (427 aa).

The tract at residues 1 to 101 (MERELGMYGN…GRGGGRGRTL (101 aa)) is disordered. The span at 22–32 (RLSDDRDRYDD) shows a compositional bias: basic and acidic residues. Ser-24 carries the phosphoserine modification. Residues 35–44 (DSSSNNGNGS) show a composition bias toward low complexity. Over residues 50–60 (DRGSRFNDRYD) the composition is skewed to basic and acidic residues. RRM domains lie at 122-198 (NSIF…QDNP) and 219-296 (FEVF…EGRF). Position 130 is a phosphothreonine (Thr-130). The segment covering 300–317 (KNNDRYNQRREDLEDTRG) has biased composition (basic and acidic residues). The segment at 300-319 (KNNDRYNQRREDLEDTRGTE) is disordered. The RRM 3 domain maps to 349-426 (CFIYCSNLPF…CSLQISYARR (78 aa)).

Post-translationally, methylated by HMT1.

Its subcellular location is the cytoplasm. It localises to the nucleus. It is found in the chromosome. The protein localises to the telomere. The protein resides in the P-body. Its subcellular location is the stress granule. Its function is as follows. Binds to intron-containing transcripts and is involved in quality control for the export of spliced mRNAs from the nucleus. Binds to pre-mRNAs until splicing is completed or until faulty mRNAs are degraded. On correctly spliced mRNAs, GBP2 and HRB1 recruit MEX67 to allow nuclear export. On faulty mRNAs, GBP2 and HRB1 associate with the TRAMP complex that guides those pre-mRNAs to the exosome for degradation. Binds single-stranded telomeric sequences of the type (TG[1-3])n in vitro. Influences the localization of RAP1 in the nuclei. Involved in modulating telomere length. The chain is Serine/arginine (SR)-type shuttling mRNA binding protein GBP2 from Saccharomyces cerevisiae (strain ATCC 204508 / S288c) (Baker's yeast).